A 378-amino-acid chain; its full sequence is Chaperone protein DnaJ (378 aa).

The J domain maps to 5 to 70 (DYYQILGIPK…EKRTAYDQYG (66 aa)). The CR-type zinc-finger motif lies at 133–211 (GTTKEIRIPT…CRGQGRIKTN (79 aa)). The Zn(2+) site is built by Cys-146, Cys-149, Cys-163, Cys-166, Cys-185, Cys-188, Cys-199, and Cys-202. CXXCXGXG motif repeat units follow at residues 146-153 (CKTCYGMG), 163-170 (CSTCHGKG), 185-192 (CPTCNGIG), and 199-206 (CRMCRGQG).

It belongs to the DnaJ family. Homodimer. Zn(2+) serves as cofactor.

The protein resides in the cytoplasm. Its function is as follows. Participates actively in the response to hyperosmotic and heat shock by preventing the aggregation of stress-denatured proteins and by disaggregating proteins, also in an autonomous, DnaK-independent fashion. Unfolded proteins bind initially to DnaJ; upon interaction with the DnaJ-bound protein, DnaK hydrolyzes its bound ATP, resulting in the formation of a stable complex. GrpE releases ADP from DnaK; ATP binding to DnaK triggers the release of the substrate protein, thus completing the reaction cycle. Several rounds of ATP-dependent interactions between DnaJ, DnaK and GrpE are required for fully efficient folding. Also involved, together with DnaK and GrpE, in the DNA replication of plasmids through activation of initiation proteins. This is Chaperone protein DnaJ from Buchnera aphidicola subsp. Schizaphis graminum (strain Sg).